The sequence spans 403 residues: Tryptophan synthase beta chain 1 (403 aa).

The residue at position 96 (K96) is an N6-(pyridoxal phosphate)lysine.

The protein belongs to the TrpB family. In terms of assembly, tetramer of two alpha and two beta chains. It depends on pyridoxal 5'-phosphate as a cofactor.

The enzyme catalyses (1S,2R)-1-C-(indol-3-yl)glycerol 3-phosphate + L-serine = D-glyceraldehyde 3-phosphate + L-tryptophan + H2O. The protein operates within amino-acid biosynthesis; L-tryptophan biosynthesis; L-tryptophan from chorismate: step 5/5. Its function is as follows. The beta subunit is responsible for the synthesis of L-tryptophan from indole and L-serine. The chain is Tryptophan synthase beta chain 1 (trpB1) from Wolinella succinogenes (strain ATCC 29543 / DSM 1740 / CCUG 13145 / JCM 31913 / LMG 7466 / NCTC 11488 / FDC 602W) (Vibrio succinogenes).